Consider the following 792-residue polypeptide: MPQAAYCYMRVVGRGSYGEVTLVKHRRDGKQYVIKKLNLRNASSRERRAAEQEAQLLSQLKHPNIVTYKESWEGGDGLLYIVMGFCEGGDLYRKLKEQKGQLLPESQVVEWFVQIAMALQYLHEKHILHRDLKTQNVFLTRTNIIKVGDLGIARVLENHGDMASTLIGTPYYMSPELFSNKPYNYKSDVWALGCCVYEMATLKHAFNAKDMNSLVYRIIEGKLPPMPKVYSTELAELIRTMLSRRPEERPSVRSILRQPYIKHHISLFLEATKAKTSKNNVKNCDSRAKPVAAVVSRKEESNTDVIHYQPRSSEGSALHVMGEDKCLSQEKPVDIGPLRSPASLEGHTGKQDMNNTGESCATISRINIDILPAERRDSANAGVVQESQPQHVDAADEVDSQCSISQEKERLQGNTKSSDQPGNLLPRRSSDGGDGEGSELVKPLYPSNKDQKPDQDQVTGIIENQDSIHPRSQPHSSMSEPSLSRQRRQKKREQTAHSGTKSQFQELPPRLLPSYPGIGKVDIIATQQNDGNQGGPVAGCVNSSRTSSTASAKDRPLSARERRRLKQSQEEMLPSGPAVQRTPSAVEPLKPQEEDQPIPAQRFSSDCSITQMNHTLPREKEKRLMHGLSEDELSSSTSSTDKSDGDSREGKSHTNEMKDLVQLMTQTLRLEAKESCEDLQVLNPGSEFRLHRKYRDTLVLHGKVAEEVEPHCTELPTGIIPGSEKIRRIVEVLRADVIQGLGIQLLEQVFDLLGEEDELEREARLQEHMGDKYTTYCVKARQLKFFEENVSF.

The Protein kinase domain maps to 6-261; the sequence is YCYMRVVGRG…VRSILRQPYI (256 aa). Residues 12–20 and Lys-35 each bind ATP; that span reads VGRGSYGEV. Catalysis depends on Asp-131, which acts as the Proton acceptor. Thr-165 bears the Phosphothreonine; by autocatalysis mark. 4 disordered regions span residues 329–358, 379–515, 527–611, and 628–657; these read QEKP…NTGE, ANAG…LPSY, QQND…SITQ, and LSED…TNEM. Residues Ser-340 and Ser-343 each carry the phosphoserine modification. Polar residues-rich tracts occupy residues 412-421, 456-467, 473-484, 496-505, and 541-551; these read QGNTKSSDQP, DQVTGIIENQDS, QPHSSMSEPSLS, AHSGTKSQFQ, and VNSSRTSSTAS. Residue Lys-566 is modified to N6-methyllysine. Over residues 602 to 611 the composition is skewed to polar residues; the sequence is RFSSDCSITQ. Positions 641-657 are enriched in basic and acidic residues; it reads DKSDGDSREGKSHTNEM. Ser-675 is modified (phosphoserine).

The protein belongs to the protein kinase superfamily. NEK Ser/Thr protein kinase family. NIMA subfamily. It depends on Mn(2+) as a cofactor. Expressed ubiquitously among various organs and is up-regulated in the testis.

Its subcellular location is the cytoplasm. The protein localises to the cell projection. It is found in the cilium. The enzyme catalyses L-seryl-[protein] + ATP = O-phospho-L-seryl-[protein] + ADP + H(+). The catalysed reaction is L-threonyl-[protein] + ATP = O-phospho-L-threonyl-[protein] + ADP + H(+). Its function is as follows. Required for normal entry into proliferative arrest after a limited number of cell divisions, also called replicative senescence. Required for normal cell cycle arrest in response to double-stranded DNA damage. Protein kinase that seems to act exclusively upon threonine residues. This is Serine/threonine-protein kinase Nek4 (Nek4) from Mus musculus (Mouse).